The primary structure comprises 126 residues: Small ribosomal subunit protein eS8 (126 aa).

A compositionally biased stretch (polar residues) spans 1-10 (MAIWQGSSLR). The tract at residues 1 to 35 (MAIWQGSSLRKPSGARSRRNKNKRNAEFGRNPAET) is disordered.

The protein belongs to the eukaryotic ribosomal protein eS8 family. Part of the 30S ribosomal subunit.

The sequence is that of Small ribosomal subunit protein eS8 from Methanosphaera stadtmanae (strain ATCC 43021 / DSM 3091 / JCM 11832 / MCB-3).